A 778-amino-acid polypeptide reads, in one-letter code: Preaspterpenacid I synthase sttA (778 aa).

The tract at residues 4–359 is sesterterpenoid synthase; sequence ISDVMKHCVP…RYHRTDLATT (356 aa). Position 105 (aspartate 105) interacts with Mg(2+). Aspartate 105 lines the substrate pocket. Positions 211–214 are substrate; sequence RVNE. Residue asparagine 255 participates in substrate binding. Substrate stretches follow at residues 259–263 and 350–351; these read SFPKE and RY. A geranylfarneyl diphosphate synthase region spans residues 360-774; the sequence is AEDRATLIGK…RMMLLGMGPK (415 aa). The disordered stretch occupies residues 423 to 445; it reads AFKKSNPRNGKQNGTEGSKGTFT. Over residues 429–445 the composition is skewed to polar residues; sequence PRNGKQNGTEGSKGTFT. Isopentenyl diphosphate-binding residues include lysine 493, arginine 496, and histidine 525. Mg(2+)-binding residues include aspartate 532 and aspartate 536. Arginine 541 contacts dimethylallyl diphosphate. Residue arginine 542 coordinates isopentenyl diphosphate. Dimethylallyl diphosphate-binding residues include lysine 619, threonine 620, glutamine 657, asparagine 664, and lysine 674.

This sequence in the N-terminal section; belongs to the terpene synthase family. The protein in the C-terminal section; belongs to the FPP/GGPP synthase family.

The enzyme catalyses 4 isopentenyl diphosphate + dimethylallyl diphosphate = (2E,6E,10E,14E)-geranylfarnesyl diphosphate + 4 diphosphate. The catalysed reaction is (2E,6E,10E,14E)-geranylfarnesyl diphosphate + H2O = preaspterpenacid acid I + diphosphate. It participates in secondary metabolite biosynthesis; terpenoid biosynthesis. Its function is as follows. Sesterterpenoid synthase; part of the gene cluster that mediates the biosynthesis of aspterpenacids. Performs both prenyl transferase and terpene cyclase activity, converting isopentenyl diphosphate and dimethylallyl diphosphate into geranylfarnesyl diphosphate (GFPP) and then converting GFPP into preaspterpenacid I. C22-oxidative modification of preaspterpenacid I by the cytochrome P450 monooxygenase sttB then leads to preaspterpenacid II. It has still to be determined how preaspterpenacid II is further modified to produce aspterpenacids. This is Preaspterpenacid I synthase sttA from Aspergillus terreus.